The following is a 508-amino-acid chain: Glycerol kinase (508 aa).

Thr-14 is a binding site for ADP. ATP contacts are provided by Thr-14, Thr-15, and Ser-16. Thr-14 is a binding site for sn-glycerol 3-phosphate. Arg-18 serves as a coordination point for ADP. Sn-glycerol 3-phosphate is bound by residues Arg-84, Glu-85, Tyr-136, and Asp-245. Glycerol contacts are provided by Arg-84, Glu-85, Tyr-136, Asp-245, and Gln-246. Residues Thr-267 and Gly-314 each coordinate ADP. Residues Thr-267, Gly-314, Gln-318, and Gly-415 each contribute to the ATP site. ADP is bound by residues Gly-415 and Asn-419.

This sequence belongs to the FGGY kinase family.

It carries out the reaction glycerol + ATP = sn-glycerol 3-phosphate + ADP + H(+). Its pathway is polyol metabolism; glycerol degradation via glycerol kinase pathway; sn-glycerol 3-phosphate from glycerol: step 1/1. Its activity is regulated as follows. Inhibited by fructose 1,6-bisphosphate (FBP). Functionally, key enzyme in the regulation of glycerol uptake and metabolism. Catalyzes the phosphorylation of glycerol to yield sn-glycerol 3-phosphate. The protein is Glycerol kinase of Bordetella parapertussis (strain 12822 / ATCC BAA-587 / NCTC 13253).